We begin with the raw amino-acid sequence, 286 residues long: uncharacterized protein (286 aa).

The tat-type signal signal peptide spans 1–31 (MKKMSRRQFLKGMFGALAAGALTAGGGYGYA). Positions 65, 67, 97, 130, 221, and 223 each coordinate a divalent metal cation.

The protein belongs to the metallophosphoesterase superfamily. It depends on a divalent metal cation as a cofactor. Predicted to be exported by the Tat system. The position of the signal peptide cleavage has not been experimentally proven.

This is an uncharacterized protein from Bacillus subtilis (strain 168).